Reading from the N-terminus, the 358-residue chain is MATDDESFPWDQDSILSRDLLSALSPQLCYENLNRSCVRSPYSPGPRLILYAVFGFGAVLAVCGNLLVMTSILHFRQLHSPANFLVASLACADLLVGLTVMPFSMVRSVEGCWYFGDSYCKLHTSFDMSFCCSSLLHLCFISVDRYIAVSDPLIYPIRFTASVSGKCITFSWFLSIIYGFSLIYTGASEAGLKDLVSALSCVGGCQIPMNQSCVLINFLLFLVPTLVMMTVYSKIFLIAKQQAQNMEKMSKQTTRASDSYKDRVAKRERKAAKTLGIAVAAFLLSWLPYLIDSIIDAFLGFITPSYVYEILVWIVYYNSAMNPLIYAFFYPWFRNAIKLIVTGKILKQNSSTTNLFSE.

Over 1–47 the chain is Extracellular; sequence MATDDESFPWDQDSILSRDLLSALSPQLCYENLNRSCVRSPYSPGPR. N34 is a glycosylation site (N-linked (GlcNAc...) asparagine). 2 disulfide bridges follow: C37-C201 and C120-C205. A helical membrane pass occupies residues 48 to 68; the sequence is LILYAVFGFGAVLAVCGNLLV. Residues 69-83 lie on the Cytoplasmic side of the membrane; that stretch reads MTSILHFRQLHSPAN. The chain crosses the membrane as a helical span at residues 84–104; it reads FLVASLACADLLVGLTVMPFS. At 105 to 125 the chain is on the extracellular side; sequence MVRSVEGCWYFGDSYCKLHTS. A helical membrane pass occupies residues 126-143; that stretch reads FDMSFCCSSLLHLCFISV. The Cytoplasmic portion of the chain corresponds to 144–166; it reads DRYIAVSDPLIYPIRFTASVSGK. A helical transmembrane segment spans residues 167–187; the sequence is CITFSWFLSIIYGFSLIYTGA. Residues 188-217 lie on the Extracellular side of the membrane; that stretch reads SEAGLKDLVSALSCVGGCQIPMNQSCVLIN. N210 carries N-linked (GlcNAc...) asparagine glycosylation. The helical transmembrane segment at 218–238 threads the bilayer; that stretch reads FLLFLVPTLVMMTVYSKIFLI. Over 239–274 the chain is Cytoplasmic; that stretch reads AKQQAQNMEKMSKQTTRASDSYKDRVAKRERKAAKT. A helical membrane pass occupies residues 275–295; sequence LGIAVAAFLLSWLPYLIDSII. Residues 296–309 are Extracellular-facing; it reads DAFLGFITPSYVYE. Residues 310 to 333 traverse the membrane as a helical segment; that stretch reads ILVWIVYYNSAMNPLIYAFFYPWF. Residues 334–358 are Cytoplasmic-facing; that stretch reads RNAIKLIVTGKILKQNSSTTNLFSE.

Belongs to the G-protein coupled receptor 1 family.

It is found in the cell membrane. Its function is as follows. Olfactory receptor specific for N,N-dimethylalkylamines trace amines. Trace amine compounds are enriched in animal body fluids and act on trace amine-associated receptors (TAARs) to elicit both intraspecific and interspecific innate behaviors. Ligand-binding causes a conformation change that triggers signaling via G(s)-class of G alpha proteins (GNAL or GNAS). The polypeptide is Trace amine-associated receptor 7h (Rattus norvegicus (Rat)).